An 86-amino-acid polypeptide reads, in one-letter code: Small ribosomal subunit protein bS20 (86 aa).

The segment covering M1–R18 has biased composition (basic and acidic residues). The interval M1 to K25 is disordered.

Belongs to the bacterial ribosomal protein bS20 family.

Its function is as follows. Binds directly to 16S ribosomal RNA. This chain is Small ribosomal subunit protein bS20, found in Mycobacteroides abscessus (strain ATCC 19977 / DSM 44196 / CCUG 20993 / CIP 104536 / JCM 13569 / NCTC 13031 / TMC 1543 / L948) (Mycobacterium abscessus).